The sequence spans 216 residues: MKFFLDTANVDEIREANALGVISGVTTNPSLIAKEGRDFIEVVKEITQIVDGPISAEVISDDSEGMIREARELAKIHKNIVIKIPMTAEGLKAVNVLSKEGIKTNVTLIFTANQALLAARAGATYVSPFVGRLDDINTDGLQIIEDIVTIFNNYDIDTEIITASVRHPIHVLQAAKLGAHIATVPYKVLMQMVKHPLTDAGIERFKEDWRKAGLKI.

Residue Lys-83 is the Schiff-base intermediate with substrate of the active site.

This sequence belongs to the transaldolase family. Type 3B subfamily.

Its subcellular location is the cytoplasm. It carries out the reaction D-sedoheptulose 7-phosphate + D-glyceraldehyde 3-phosphate = D-erythrose 4-phosphate + beta-D-fructose 6-phosphate. It participates in carbohydrate degradation; pentose phosphate pathway; D-glyceraldehyde 3-phosphate and beta-D-fructose 6-phosphate from D-ribose 5-phosphate and D-xylulose 5-phosphate (non-oxidative stage): step 2/3. Functionally, transaldolase is important for the balance of metabolites in the pentose-phosphate pathway. In Thermoanaerobacter sp. (strain X514), this protein is Probable transaldolase.